Here is a 737-residue protein sequence, read N- to C-terminus: ATP-dependent RNA helicase SUV3, mitochondrial (737 aa).

A mitochondrion-targeting transit peptide spans 1–25 (MTLVKYSTIAFPLRSFRLFIFVKKA). Positions 226–365 (EARKIRRHII…KSVLPLVKSI (140 aa)) constitute a Helicase ATP-binding domain. 239 to 246 (GPTNSGKT) provides a ligand contact to ATP. One can recognise a Helicase C-terminal domain in the interval 390–546 (PVKDGIKGLR…YLKTAVTWPT (157 aa)).

It belongs to the helicase family.

The protein resides in the mitochondrion. It carries out the reaction ATP + H2O = ADP + phosphate + H(+). In terms of biological role, probable ATP-dependent RNA helicase involved in a variety of mitochondrial post-transcriptional processes and in translation. It is a key control element in nuclear-mitochondrial interactions. The polypeptide is ATP-dependent RNA helicase SUV3, mitochondrial (SUV3) (Saccharomyces paradoxus (Yeast)).